A 101-amino-acid polypeptide reads, in one-letter code: Small ribosomal subunit protein uS14 (101 aa).

It belongs to the universal ribosomal protein uS14 family. Part of the 30S ribosomal subunit. Contacts proteins S3 and S10.

In terms of biological role, binds 16S rRNA, required for the assembly of 30S particles and may also be responsible for determining the conformation of the 16S rRNA at the A site. The protein is Small ribosomal subunit protein uS14 of Neorickettsia sennetsu (strain ATCC VR-367 / Miyayama) (Ehrlichia sennetsu).